The following is a 110-amino-acid chain: uncharacterized protein (110 aa).

Disordered regions lie at residues 1–42 and 66–110; these read MEWG…RAQQ and RQLG…AAEP. A coiled-coil region spans residues 36 to 68; it reads REERAQQLLDAVEQRQRQLLDTIAACEEMLRQL.

This is an uncharacterized protein from Homo sapiens (Human).